A 177-amino-acid chain; its full sequence is von Ebner gland protein 1 (177 aa).

An N-terminal signal peptide occupies residues 1–18 (MKALLLTFGLSLLAALQA). Cysteines 80 and 172 form a disulfide.

Belongs to the calycin superfamily. Lipocalin family. In terms of assembly, homodimer.

It localises to the secreted. Its function is as follows. Could play a role in taste reception. Could be necessary for the concentration and delivery of sapid molecules in the gustatory system. This chain is von Ebner gland protein 1 (Vegp1), found in Rattus norvegicus (Rat).